The sequence spans 313 residues: MEPNLQFWISERQAFFRRFCQWMDLLDPVNMFISIGSIEKSRQLLFTTEDAPKHYLDNQVIKDAWNKSLSTVHPDSSKLIPHLFRPAAFLPVTAPMVFLLMMPDTGIKSIILTQGCLYGYTTAFNITNGNASYSHGPVERTLLGAGVSVSSTFIGLIPHLFQMKYPPNNFWLKRTLPIVFLAQVSGMNVFASRSFENHRGIEVMDKEGHVVGHSRKAGRKAIKDTAKSRAVLFGTSALAPELFIHIFKRTRFYPQTLLSLVILRMSSTFFMMGLMVPVSFSMFPQIGQIQCSQLEEKIQSSTEEKELFYYRGV.

The next 2 membrane-spanning stretches (helical) occupy residues 87–107 and 141–161; these read AAFL…DTGI and TLLG…PHLF. Lysine 173 is modified (N6-acetyllysine). The next 3 membrane-spanning stretches (helical) occupy residues 175–191, 230–247, and 269–289; these read TLPI…NVFA, AVLF…IHIF, and FFMM…IGQI.

The protein belongs to the sideroflexin family. As to expression, largely restricted to kidney, brain and heart.

It is found in the mitochondrion inner membrane. Its function is as follows. Mitochondrial amino-acid transporter. Does not act as a serine transporter: not able to mediate transport of serine into mitochondria. The polypeptide is Sideroflexin-4 (Mus musculus (Mouse)).